A 185-amino-acid chain; its full sequence is Ribosome-recycling factor (185 aa).

The protein belongs to the RRF family.

It localises to the cytoplasm. Functionally, responsible for the release of ribosomes from messenger RNA at the termination of protein biosynthesis. May increase the efficiency of translation by recycling ribosomes from one round of translation to another. This chain is Ribosome-recycling factor, found in Campylobacter lari (strain RM2100 / D67 / ATCC BAA-1060).